The following is a 382-amino-acid chain: D-galactonate dehydratase (382 aa).

Aspartate 183 lines the Mg(2+) pocket. The active-site Proton donor is histidine 185. Mg(2+) contacts are provided by glutamate 209 and glutamate 235. Histidine 285 acts as the Proton acceptor in catalysis.

Belongs to the mandelate racemase/muconate lactonizing enzyme family. GalD subfamily. Mg(2+) is required as a cofactor.

The enzyme catalyses D-galactonate = 2-dehydro-3-deoxy-D-galactonate + H2O. Its pathway is carbohydrate acid metabolism; D-galactonate degradation; D-glyceraldehyde 3-phosphate and pyruvate from D-galactonate: step 1/3. Its function is as follows. Catalyzes the dehydration of D-galactonate to 2-keto-3-deoxy-D-galactonate. The protein is D-galactonate dehydratase of Escherichia fergusonii (strain ATCC 35469 / DSM 13698 / CCUG 18766 / IAM 14443 / JCM 21226 / LMG 7866 / NBRC 102419 / NCTC 12128 / CDC 0568-73).